We begin with the raw amino-acid sequence, 82 residues long: Sigma-G-dependent sporulation-specific SASP protein (82 aa).

This Bacillus subtilis (strain 168) protein is Sigma-G-dependent sporulation-specific SASP protein.